A 289-amino-acid polypeptide reads, in one-letter code: ATP synthase gamma chain (289 aa).

It belongs to the ATPase gamma chain family. In terms of assembly, F-type ATPases have 2 components, CF(1) - the catalytic core - and CF(0) - the membrane proton channel. CF(1) has five subunits: alpha(3), beta(3), gamma(1), delta(1), epsilon(1). CF(0) has three main subunits: a, b and c.

The protein localises to the cell inner membrane. In terms of biological role, produces ATP from ADP in the presence of a proton gradient across the membrane. The gamma chain is believed to be important in regulating ATPase activity and the flow of protons through the CF(0) complex. The sequence is that of ATP synthase gamma chain from Haemophilus influenzae (strain 86-028NP).